A 464-amino-acid chain; its full sequence is Protein FAM90A23 (464 aa).

Disordered stretches follow at residues 1–42, 69–389, and 415–437; these read MMAR…DPRL, VPAT…HDGA, and HSPE…SEAP. Basic and acidic residues-rich tracts occupy residues 74–89 and 97–114; these read GKKE…KPRA and NKDK…DPQR. The span at 180-197 shows a compositional bias: low complexity; that stretch reads LASLSPLRKASLSSSSSL.

This sequence belongs to the FAM90 family.

The chain is Protein FAM90A23 from Homo sapiens (Human).